The following is a 377-amino-acid chain: Nitric oxide reductase FlRd-NAD(+) reductase (377 aa).

The protein belongs to the FAD-dependent oxidoreductase family. It depends on FAD as a cofactor.

Its subcellular location is the cytoplasm. The enzyme catalyses 2 reduced [nitric oxide reductase rubredoxin domain] + NAD(+) + H(+) = 2 oxidized [nitric oxide reductase rubredoxin domain] + NADH. It functions in the pathway nitrogen metabolism; nitric oxide reduction. Its function is as follows. One of at least two accessory proteins for anaerobic nitric oxide (NO) reductase. Reduces the rubredoxin moiety of NO reductase. In Klebsiella pneumoniae subsp. pneumoniae (strain ATCC 700721 / MGH 78578), this protein is Nitric oxide reductase FlRd-NAD(+) reductase.